A 438-amino-acid chain; its full sequence is GRAS family protein TF80 (438 aa).

A GRAS domain is found at 13-436; that stretch reads LRYDSHGSNP…RPLFSVSAWK (424 aa). The tract at residues 20–81 is leucine repeat I (LRI); it reads SNPMIPLIEC…YKIVKHLPGV (62 aa). Positions 100 to 165 are VHIID; sequence QKYFYDLCPF…GGPPFLKITG (66 aa). A VHIID motif is present at residues 131–135; that stretch reads VHIID. The interval 175-207 is leucine repeat II (LRII); it reads QMSFHLTTEAGILDFPLQFNPIISKLEDVDFEN. Residues 216–359 form a PFYRE region; sequence VAISSVLQLH…SMLLGEQIKN (144 aa). Residues 224–228 carry the LXXLL motif motif; the sequence is LHSLL. Residues 362–436 form an SAW region; sequence TCEGVDRKER…RPLFSVSAWK (75 aa).

This sequence belongs to the GRAS family. In terms of assembly, interacts with RAM1.

Its subcellular location is the nucleus. This chain is GRAS family protein TF80 (TF80), found in Medicago truncatula (Barrel medic).